Reading from the N-terminus, the 363-residue chain is Phosphoserine aminotransferase (363 aa).

An L-glutamate-binding site is contributed by arginine 42. The pyridoxal 5'-phosphate site is built by tryptophan 105, threonine 155, aspartate 175, and glutamine 198. Lysine 199 bears the N6-(pyridoxal phosphate)lysine mark. 240-241 (NT) is a binding site for pyridoxal 5'-phosphate.

Belongs to the class-V pyridoxal-phosphate-dependent aminotransferase family. SerC subfamily. In terms of assembly, homodimer. Pyridoxal 5'-phosphate serves as cofactor.

It is found in the cytoplasm. It catalyses the reaction O-phospho-L-serine + 2-oxoglutarate = 3-phosphooxypyruvate + L-glutamate. The enzyme catalyses 4-(phosphooxy)-L-threonine + 2-oxoglutarate = (R)-3-hydroxy-2-oxo-4-phosphooxybutanoate + L-glutamate. It functions in the pathway amino-acid biosynthesis; L-serine biosynthesis; L-serine from 3-phospho-D-glycerate: step 2/3. It participates in cofactor biosynthesis; pyridoxine 5'-phosphate biosynthesis; pyridoxine 5'-phosphate from D-erythrose 4-phosphate: step 3/5. Its function is as follows. Catalyzes the reversible conversion of 3-phosphohydroxypyruvate to phosphoserine and of 3-hydroxy-2-oxo-4-phosphonooxybutanoate to phosphohydroxythreonine. This is Phosphoserine aminotransferase from Herminiimonas arsenicoxydans.